Reading from the N-terminus, the 611-residue chain is MAASKPIEAAMAAAAAPGSGNGVGGGGGTAGPGSGAGTLPRWHVALAIGAPLLLGAGAMYLWSRRRRRREAGGRGDASGLKRNSERKTPEGRASPALGSGHHDGSGDSLEMSSLDRAQAAKNKGNKYFKAGKYEQAIQCYTEAISLCPTEKNVDLSTFYQNRAAAFEQLQKWKEVAQDCTKAVELNPKYVKALFRRAKAHEKLDNKKECLEDVTAVCILEGFQNEQSMLLADKVLKLLGKENAKEKYKNREPLMPSPQFIKSYFSSFTDDIISQPMLKGEKSDEDKDKEGEALEVKENSGYLKAKQYMEEENYDKIISECSKEIDAQGKYMAEALLLRATFYLLIGSANAAKPDLDKVISLKEANVKLRANALIKRGTMCMQQQQPMLSTQDFNMAAEIDPMNSDVYHHRGQLKILLDLVEEAVADFDACIRLRPKFALAQAQKCFALYRQAYTANNSSQVQAAMKGFEEIIKKFPRCAEGYALYAQALTDQQQFGKADEMYDKCIDLEPDNATTYVHKGLLQLQWKQDLDKGLELISKAIEIDNKCDFAYETMGTIEVQRGNMEKAIDMFNKAINLAKSEMEMAHLYSLCDAAHAQTEVAKKYGLKPPTL.

Position 2 is an N-acetylalanine (A2). The Mitochondrial intermembrane segment spans residues 2-41 (AASKPIEAAMAAAAAPGSGNGVGGGGGTAGPGSGAGTLPR). A helical transmembrane segment spans residues 42–62 (WHVALAIGAPLLLGAGAMYLW). Over 63–611 (SRRRRRREAG…KKYGLKPPTL (549 aa)) the chain is Cytoplasmic. Positions 69–110 (REAGGRGDASGLKRNSERKTPEGRASPALGSGHHDGSGDSLE) are disordered. The residue at position 74 (R74) is an Omega-N-methylarginine. Residues S94, S99, S105, S108, and S113 each carry the phosphoserine modification. TPR repeat units lie at residues 117-150 (AQAAKNKGNKYFKAGKYEQAIQCYTEAISLCPTE) and 156-189 (STFYQNRAAAFEQLQKWKEVAQDCTKAVELNPKY). K188 is modified (N6-acetyllysine). K278 participates in a covalent cross-link: Glycyl lysine isopeptide (Lys-Gly) (interchain with G-Cter in SUMO2). 8 TPR repeats span residues 297-330 (ENSGYLKAKQYMEEENYDKIISECSKEIDAQGKY), 332-365 (AEALLLRATFYLLIGSANAAKPDLDKVISLKEAN), 370-403 (ANALIKRGTMCMQQQQPMLSTQDFNMAAEIDPMN), 404-437 (SDVYHHRGQLKILLDLVEEAVADFDACIRLRPKF), 445-478 (CFALYRQAYTANNSSQVQAAMKGFEEIIKKFPRC), 479-512 (AEGYALYAQALTDQQQFGKADEMYDKCIDLEPDN), 514-547 (TTYVHKGLLQLQWKQDLDKGLELISKAIEIDNKC), and 548-581 (DFAYETMGTIEVQRGNMEKAIDMFNKAINLAKSE).

Belongs to the Tom70 family. As to quaternary structure, forms part of the preprotein translocase complex of the outer mitochondrial membrane (TOM complex) which consists of at least 7 different proteins (TOMM5, TOMM6, TOMM7, TOMM20, TOMM22, TOMM40 and TOMM70). Interacts with CAPN8. Interacts with TRADD, TRAF6 and STING. Interacts with MAVS. Interacts with HSPA8 and HSP90AA1; both interactions are required for preprotein mitochondrial import. The interaction with HSP90AA1 is direct and mediates the association of TOMM70 with IRF3 and TBK1. Upon mitochondrial depolarization, interacts with PINK1; the interaction is required for PINK1-TOM-TIM23 supercomplex formation which is critical for PINK1 stabilization at the outer mitochondrial membrane, kinase activation and downstream mitophagy. Expressed in the base region of the oxyntic and pyloric mucosae.

It localises to the mitochondrion outer membrane. Acts as a receptor of the preprotein translocase complex of the outer mitochondrial membrane (TOM complex). Recognizes and mediates the translocation of mitochondrial preproteins from the cytosol into the mitochondria in a chaperone dependent manner. Mediates TBK1 and IRF3 activation induced by MAVS in response to virus infection and promotes host antiviral responses during virus infection. The chain is Mitochondrial import receptor subunit TOM70 from Mus musculus (Mouse).